A 295-amino-acid polypeptide reads, in one-letter code: UDP-N-acetylenolpyruvoylglucosamine reductase (295 aa).

The 166-residue stretch at 23-188 (KVGGPADFLA…ISAKFALKPG (166 aa)) folds into the FAD-binding PCMH-type domain. Arg167 is a catalytic residue. Ser217 (proton donor) is an active-site residue. Residue Glu287 is part of the active site.

It belongs to the MurB family. Requires FAD as cofactor.

The protein localises to the cytoplasm. It catalyses the reaction UDP-N-acetyl-alpha-D-muramate + NADP(+) = UDP-N-acetyl-3-O-(1-carboxyvinyl)-alpha-D-glucosamine + NADPH + H(+). It functions in the pathway cell wall biogenesis; peptidoglycan biosynthesis. Its function is as follows. Cell wall formation. In Streptococcus pyogenes serotype M18 (strain MGAS8232), this protein is UDP-N-acetylenolpyruvoylglucosamine reductase.